We begin with the raw amino-acid sequence, 60 residues long: Large ribosomal subunit protein uL30 (60 aa).

It belongs to the universal ribosomal protein uL30 family. In terms of assembly, part of the 50S ribosomal subunit.

The sequence is that of Large ribosomal subunit protein uL30 from Staphylococcus epidermidis (strain ATCC 35984 / DSM 28319 / BCRC 17069 / CCUG 31568 / BM 3577 / RP62A).